A 411-amino-acid polypeptide reads, in one-letter code: Tyrosine--tRNA ligase (411 aa).

Tyr-34 contacts L-tyrosine. The 'HIGH' region signature appears at Cys-39 to Ser-48. The L-tyrosine site is built by Tyr-171 and Gln-175. Positions Lys-231–Thr-235 match the 'KMSKS' region motif. Position 234 (Lys-234) interacts with ATP. In terms of domain architecture, S4 RNA-binding spans Ile-345–Val-411.

Belongs to the class-I aminoacyl-tRNA synthetase family. TyrS type 1 subfamily. Homodimer.

Its subcellular location is the cytoplasm. The enzyme catalyses tRNA(Tyr) + L-tyrosine + ATP = L-tyrosyl-tRNA(Tyr) + AMP + diphosphate + H(+). Its function is as follows. Catalyzes the attachment of tyrosine to tRNA(Tyr) in a two-step reaction: tyrosine is first activated by ATP to form Tyr-AMP and then transferred to the acceptor end of tRNA(Tyr). The polypeptide is Tyrosine--tRNA ligase (Rickettsia prowazekii (strain Madrid E)).